Here is a 299-residue protein sequence, read N- to C-terminus: Pyridoxal 5'-phosphate synthase subunit PdxS (299 aa).

A D-ribose 5-phosphate-binding site is contributed by aspartate 24. Lysine 81 (schiff-base intermediate with D-ribose 5-phosphate) is an active-site residue. Glycine 153 serves as a coordination point for D-ribose 5-phosphate. Arginine 165 serves as a coordination point for D-glyceraldehyde 3-phosphate. Residues glycine 219 and glycine 240–serine 241 each bind D-ribose 5-phosphate.

It belongs to the PdxS/SNZ family. As to quaternary structure, in the presence of PdxT, forms a dodecamer of heterodimers.

The enzyme catalyses aldehydo-D-ribose 5-phosphate + D-glyceraldehyde 3-phosphate + L-glutamine = pyridoxal 5'-phosphate + L-glutamate + phosphate + 3 H2O + H(+). It participates in cofactor biosynthesis; pyridoxal 5'-phosphate biosynthesis. Functionally, catalyzes the formation of pyridoxal 5'-phosphate from ribose 5-phosphate (RBP), glyceraldehyde 3-phosphate (G3P) and ammonia. The ammonia is provided by the PdxT subunit. Can also use ribulose 5-phosphate and dihydroxyacetone phosphate as substrates, resulting from enzyme-catalyzed isomerization of RBP and G3P, respectively. This is Pyridoxal 5'-phosphate synthase subunit PdxS from Methanococcus vannielii (strain ATCC 35089 / DSM 1224 / JCM 13029 / OCM 148 / SB).